The following is a 321-amino-acid chain: Peptidase 1 (321 aa).

An N-terminal signal peptide occupies residues M1–A18. Residues R19–E98 constitute a propeptide, activation peptide. Intrachain disulfides connect C102–C216, C130–C170, and C164–C202. C133 is a catalytic residue. The N-linked (GlcNAc...) asparagine glycan is linked to N151. Catalysis depends on residues H269 and R288.

Belongs to the peptidase C1 family. As to quaternary structure, monomer.

The protein localises to the secreted. It carries out the reaction Broad endopeptidase specificity.. Functionally, thiol protease that hydrolyzes proteins, with a preference for Phe or basic residues. This is Peptidase 1 (DERF1) from Dermatophagoides farinae (American house dust mite).